The primary structure comprises 661 residues: MSQAISLTFPDGSVRGYDAGATGRDVAESISKSLAKKAVAVAIDGTVRDLSDPVTTGRIEIITRNDDRALELIRHDAAHVMAEAVQELWPGTQVTIGPVIENGFYYDFAKNEPFTLDDLPKIEKKMKEIIARNAAFTKQVWSRDRAKQVFADKGEQYKVELVDAIPEGQDLKIYYQGDWFDLCRGPHMASTGQIGSAFKLLKVAGAYWRGDSNNPMLSRIYGTAFAEQSELDNYLHMLAEAEKRDHRRLGREMDLFHFQEEGPGVVFWHGKGWRVFQTLVAYMRRRLAGDYQEVNAPQVLDKSLWETSGHWGWYRDSMFKVTVAGDDTDDDRVFALKPMNCPGHIQIFKHGLKSYRELPIRLAEFGNVHRYEPSGALHGLMRVRGFTQDDAHIFCTDEQMAAECLKINDLILSVYKDFGFDEVTIKLSTRPDKRVGSDELWDRAESVMMGVLETIQQQSNNIKTGILPGEGAFYGPKFEYTLKDAIGREWQCGTTQVDFNLPERFGAFYIDSNSEKTQPVMIHRAICGSMERFLGILIENFAGHMPLWVSPLQVVVATITSEADAYGLEVAEALREAGLNVETDFRNEKINYKIREHSVTKVPVIIVCGRKEAEERTVNIRRLGSQDQVSMGLDAAVESLALEATPPDIRRKAEARKAKAA.

One can recognise a TGS domain in the interval 1–64 (MSQAISLTFP…TTGRIEIITR (64 aa)). Residues 245-546 (DHRRLGREMD…LIENFAGHMP (302 aa)) are catalytic. Zn(2+) contacts are provided by Cys-341, His-392, and His-523.

This sequence belongs to the class-II aminoacyl-tRNA synthetase family. In terms of assembly, homodimer. It depends on Zn(2+) as a cofactor.

The protein localises to the cytoplasm. The catalysed reaction is tRNA(Thr) + L-threonine + ATP = L-threonyl-tRNA(Thr) + AMP + diphosphate + H(+). In terms of biological role, catalyzes the attachment of threonine to tRNA(Thr) in a two-step reaction: L-threonine is first activated by ATP to form Thr-AMP and then transferred to the acceptor end of tRNA(Thr). Also edits incorrectly charged L-seryl-tRNA(Thr). The chain is Threonine--tRNA ligase from Rhizobium johnstonii (strain DSM 114642 / LMG 32736 / 3841) (Rhizobium leguminosarum bv. viciae).